The sequence spans 871 residues: Alanine--tRNA ligase (871 aa).

Residues H561, H565, C665, and H669 each coordinate Zn(2+).

Belongs to the class-II aminoacyl-tRNA synthetase family. It depends on Zn(2+) as a cofactor.

Its subcellular location is the cytoplasm. It catalyses the reaction tRNA(Ala) + L-alanine + ATP = L-alanyl-tRNA(Ala) + AMP + diphosphate. Catalyzes the attachment of alanine to tRNA(Ala) in a two-step reaction: alanine is first activated by ATP to form Ala-AMP and then transferred to the acceptor end of tRNA(Ala). Also edits incorrectly charged Ser-tRNA(Ala) and Gly-tRNA(Ala) via its editing domain. This chain is Alanine--tRNA ligase, found in Dehalococcoides mccartyi (strain ATCC BAA-2100 / JCM 16839 / KCTC 5957 / BAV1).